A 248-amino-acid polypeptide reads, in one-letter code: Pathogenesis-related thaumatin-like protein 3.4 (248 aa).

The signal sequence occupies residues 1–25 (MARAILWVLLTVMAVSLLLHAGVEG). 8 disulfide bridges follow: Cys-34/Cys-227, Cys-75/Cys-85, Cys-90/Cys-96, Cys-141/Cys-216, Cys-146/Cys-199, Cys-154/Cys-164, Cys-168/Cys-177, and Cys-178/Cys-186. The N-linked (GlcNAc...) asparagine glycan is linked to Asn-235.

It belongs to the thaumatin family. Mainly expressed in male and female strobili, and, at lower levels, in roots of seedlings and saplings.

May be involved in disease resistance. The protein is Pathogenesis-related thaumatin-like protein 3.4 of Cryptomeria japonica (Japanese cedar).